Consider the following 118-residue polypeptide: Ig heavy chain V region AC38 205.12 (118 aa).

A v segment region spans residues 1–98 (EVQLQQSGPE…EDSAVYYCAR (98 aa)). A disulfide bridge connects residues C22 and C96. Residues 99-104 (GYGYDP) are d segment. Residues 105 to 118 (FDVWGTGTTVTVSS) form a j segment region.

The polypeptide is Ig heavy chain V region AC38 205.12 (Mus musculus (Mouse)).